Here is a 705-residue protein sequence, read N- to C-terminus: Elongation factor G (705 aa).

One can recognise a tr-type G domain in the interval 6–282 (NKVRNIGIMA…AVVDFLPSPL (277 aa)). GTP contacts are provided by residues 15–22 (AHIDAGKT), 79–83 (DTPGH), and 133–136 (NKMD).

The protein belongs to the TRAFAC class translation factor GTPase superfamily. Classic translation factor GTPase family. EF-G/EF-2 subfamily.

The protein resides in the cytoplasm. Functionally, catalyzes the GTP-dependent ribosomal translocation step during translation elongation. During this step, the ribosome changes from the pre-translocational (PRE) to the post-translocational (POST) state as the newly formed A-site-bound peptidyl-tRNA and P-site-bound deacylated tRNA move to the P and E sites, respectively. Catalyzes the coordinated movement of the two tRNA molecules, the mRNA and conformational changes in the ribosome. This Corynebacterium glutamicum (strain ATCC 13032 / DSM 20300 / JCM 1318 / BCRC 11384 / CCUG 27702 / LMG 3730 / NBRC 12168 / NCIMB 10025 / NRRL B-2784 / 534) protein is Elongation factor G.